Consider the following 207-residue polypeptide: Large ribosomal subunit protein uL4 (207 aa).

It belongs to the universal ribosomal protein uL4 family. Part of the 50S ribosomal subunit.

Its function is as follows. One of the primary rRNA binding proteins, this protein initially binds near the 5'-end of the 23S rRNA. It is important during the early stages of 50S assembly. It makes multiple contacts with different domains of the 23S rRNA in the assembled 50S subunit and ribosome. Functionally, forms part of the polypeptide exit tunnel. The polypeptide is Large ribosomal subunit protein uL4 (Pelagibacter ubique (strain HTCC1062)).